A 256-amino-acid polypeptide reads, in one-letter code: UPF0246 protein HCH_04801 (256 aa).

Belongs to the UPF0246 family.

The chain is UPF0246 protein HCH_04801 from Hahella chejuensis (strain KCTC 2396).